Reading from the N-terminus, the 336-residue chain is Inactive serine/threonine-protein kinase PLK5 (336 aa).

One can recognise a Protein kinase; truncated domain in the interval 1–65 (MYTVLTGTPP…LDHLLQDDFF (65 aa)). Disordered regions lie at residues 109 to 135 (PCPF…WDGE) and 224 to 245 (GRTG…LPTP). The POLO box domain occupies 255-336 (LLRFLASEHA…HHALRMLQSI (82 aa)).

It belongs to the protein kinase superfamily. Ser/Thr protein kinase family. CDC5/Polo subfamily. As to expression, expressed in the brain, neurons and glial cells. Also expressed in highly differentiated cells, such as the serous acini in the parotid gland, distal and proximal tubules of the kidney, tubules of the seminal gland, Kupffer cells and some hepatocytes in the liver, and some cells in the germinal center of lymph nodes (at protein level).

Its subcellular location is the nucleus. The protein resides in the nucleolus. It is found in the cytoplasm. In terms of biological role, inactive serine/threonine-protein kinase that plays a role in cell cycle progression and neuronal differentiation. This Homo sapiens (Human) protein is Inactive serine/threonine-protein kinase PLK5 (PLK5).